Consider the following 178-residue polypeptide: Large ribosomal subunit protein bL17 (178 aa).

Belongs to the bacterial ribosomal protein bL17 family. In terms of assembly, part of the 50S ribosomal subunit. Contacts protein L32.

This is Large ribosomal subunit protein bL17 from Lachnospira eligens (strain ATCC 27750 / DSM 3376 / VPI C15-48 / C15-B4) (Eubacterium eligens).